Consider the following 144-residue polypeptide: 3-hydroxyacyl-[acyl-carrier-protein] dehydratase FabZ (144 aa).

The active site involves H48.

It belongs to the thioester dehydratase family. FabZ subfamily.

The protein localises to the cytoplasm. It catalyses the reaction a (3R)-hydroxyacyl-[ACP] = a (2E)-enoyl-[ACP] + H2O. In terms of biological role, involved in unsaturated fatty acids biosynthesis. Catalyzes the dehydration of short chain beta-hydroxyacyl-ACPs and long chain saturated and unsaturated beta-hydroxyacyl-ACPs. This is 3-hydroxyacyl-[acyl-carrier-protein] dehydratase FabZ from Bacillus pumilus (strain SAFR-032).